The sequence spans 2864 residues: Genome polyprotein (2864 aa).

Composition is skewed to polar residues over residues 1-10 (MPVISTQTSP) and 21-32 (QTQASYPVSIKT). The interval 1–49 (MPVISTQTSPVPAPRTRKNKQTQASYPVSIKTSVERGQRAKRKVQRDAR) is disordered. A helical transmembrane segment spans residues 133–153 (WATGWFGVHLFVVCLLSLACP). Asparagine 165, asparagine 212, and asparagine 264 each carry an N-linked (GlcNAc...) asparagine; by host glycan. A helical transmembrane segment spans residues 324–344 (LIYYASRGKWYQLLLALMLYI). Residues asparagine 380, asparagine 400, asparagine 422, asparagine 446, asparagine 467, and asparagine 512 are each glycosylated (N-linked (GlcNAc...) asparagine; by host). The next 5 membrane-spanning stretches (helical) occupy residues 582 to 602 (AVVL…AYLC), 628 to 648 (AGWD…FFIC), 660 to 680 (LLGF…AAAA), 706 to 726 (PRIA…LLHL), and 737 to 757 (IIGG…RFGF). N-linked (GlcNAc...) asparagine; by host glycosylation is present at asparagine 782. 2 helical membrane-spanning segments follow: residues 790 to 810 (FLLV…TFCV) and 847 to 867 (WYSH…GVFF). Residues 819–940 (TSSAASFFGT…AMPPDGWAIT (122 aa)) enclose the Peptidase C18 domain. Active-site for protease NS2 activity; shared with dimeric partner residues include histidine 870, glutamate 888, and cysteine 909. Positions 941-1122 (APFTLQCLSE…VCAGYHPQYT (182 aa)) constitute a Peptidase S29 domain. Residues histidine 997 and aspartate 1021 each act as charge relay system; for serine protease NS3 activity in the active site. Positions 1037 and 1039 each coordinate Zn(2+). An N-linked (GlcNAc...) asparagine; by host glycan is attached at asparagine 1057. Catalysis depends on serine 1079, which acts as the Charge relay system; for serine protease NS3 activity. Residues cysteine 1085 and histidine 1089 each contribute to the Zn(2+) site. A Helicase ATP-binding domain is found at 1131–1281 (PTVPNEYSVQ…ANITEIQLTD (151 aa)). 1144–1151 (APTGSGKS) serves as a coordination point for ATP. Serine 1151 and glutamate 1229 together coordinate Mg(2+). The DECH box signature appears at 1228–1231 (DECH). N-linked (GlcNAc...) asparagine; by host glycosylation occurs at asparagine 1273. A Helicase C-terminal domain is found at 1284-1449 (TIPFHGKKIK…GLSSTEAQTI (166 aa)). An N-linked (GlcNAc...) asparagine; by host glycan is attached at asparagine 1559. The next 5 membrane-spanning stretches (helical) occupy residues 1565–1585 (ALAV…FGAT), 1653–1673 (FLGP…GLVT), 1678–1698 (PFAS…PHKI), 1722–1742 (FMMA…GFVF), and 1783–1803 (AAGV…TAGP). Cysteine 1863 carries the S-palmitoyl cysteine; by host lipid modification. A helical transmembrane segment spans residues 1864–1884 (GLIAWGLEIWQYVCNFFVICF). Zn(2+) is bound by residues cysteine 1905, cysteine 1923, cysteine 1925, and cysteine 1947. Disordered regions lie at residues 2139–2178 (TGSL…SPPV) and 2209–2266 (GPDD…TKKK). A compositionally biased stretch (polar residues) spans 2226 to 2240 (SDGSWSTTTTASSYV). In terms of domain architecture, RdRp catalytic spans 2485–2603 (AVGATCDTVC…IWKSAGADAD (119 aa)). Aspartate 2491, aspartate 2589, and aspartate 2590 together coordinate Mg(2+). Asparagine 2640 and asparagine 2722 each carry an N-linked (GlcNAc...) asparagine; by host glycan. A helical transmembrane segment spans residues 2844-2864 (VKYLAVIVFALGLIAVGLAIS).

As to quaternary structure, homooligomer. Interacts with E1 (via C-terminus). Interacts with the non-structural protein 5A. Part of the viral assembly initiation complex composed of NS2, E1, E2, NS3, NS4A, NS5A and the core protein. Forms a heterodimer with envelope glycoprotein E2. Interacts with the core protein. Interacts with protease NS2. Part of the viral assembly initiation complex composed of NS2, E1, E2, NS3, NS4A, NS5A and the core protein. In terms of assembly, forms a heterodimer with envelope glycoprotein E1. Part of the viral assembly initiation complex composed of NS2, E1, E2, NS3, NS4A, NS5A and the core protein. As to quaternary structure, homodimer. Interacts with envelope glycoprotein E1. Interacts with envelope glycoprotein E2. Interacts with viroporin p7. Interacts with serine protease/helicase NS3. Part of the replication complex composed of NS2, NS3, NS4A, NS4B, NS5A and the RNA-directed RNA polymerase embedded in an ER-derived membranous web. Part of the viral assembly initiation complex composed of NS2, E1, E2, NS3, NS4A, NS5A and the core protein. Interacts with protease NS2. Interacts with non-structural protein 4A; this interaction stabilizes the folding of NS3 serine protease. NS3-NS4A interaction is essential for NS3 activation and allows membrane anchorage of the latter. Interacts with host MAVS; this interaction leads to the cleavage and inhibition of host MAVS. Part of the replication complex composed of NS2, NS3, NS4A, NS4B, NS5A and the RNA-directed RNA polymerase embedded in an ER-derived membranous web. Part of the viral assembly initiation complex composed of NS2, E1, E2, NS3, NS4A, NS5A and the core protein. In terms of assembly, interacts with NS3 serine protease; this interaction stabilizes the folding of NS3 serine protease. NS3-NS4A interaction is essential for NS3 activation and allows membrane anchorage of the latter. Interacts with non-structural protein 5A (via N-terminus). Part of the replication complex composed of NS2, NS3, NS4A, NS4B, NS5A and the RNA-directed RNA polymerase embedded in an ER-derived membranous web. Part of the viral assembly initiation complex composed of NS2, E1, E2, NS3, NS4A, NS5A and the core protein. As to quaternary structure, monomer. Homodimer; dimerization is required for RNA-binding. Interacts with the core protein. Interacts (via N-terminus) with non-structural protein 4A. Interacts with non-structural protein 4B. Interacts with RNA-directed RNA polymerase. Part of the viral assembly initiation complex composed of NS2, E1, E2, NS3, NS4A, NS5A and the core protein. Part of the replication complex composed of NS2, NS3, NS4A, NS4B, NS5A and the RNA-directed RNA polymerase. Requires Zn(2+) as cofactor. Mg(2+) is required as a cofactor. It depends on Mn(2+) as a cofactor. Specific enzymatic cleavages in vivo yield mature proteins. The structural proteins, core, E1, E2 and p7 are produced by proteolytic processing by host signal peptidases. The other proteins (p7, NS2, NS3, NS4A, NS4B, NS5A and NS5B) are cleaved by the viral proteases. Autoprocessing between NS2 and NS3 is mediated by the NS2 cysteine protease catalytic domain and regulated by the NS3 N-terminal domain. P13 may be further cleaved into p6 and p7 if the internal cleavage site is used. Post-translationally, highly N-glycosylated. In terms of processing, palmitoylated. This modification may play a role in its polymerization or in protein-protein interactions.

Its subcellular location is the virion. The protein resides in the host cytoplasm. It is found in the host lipid droplet. It localises to the virion membrane. The protein localises to the host endoplasmic reticulum membrane. Its subcellular location is the host perinuclear region. The protein resides in the host mitochondrion. It is found in the host nucleus. It catalyses the reaction Hydrolysis of four peptide bonds in the viral precursor polyprotein, commonly with Asp or Glu in the P6 position, Cys or Thr in P1 and Ser or Ala in P1'.. The catalysed reaction is a ribonucleoside 5'-triphosphate + H2O = a ribonucleoside 5'-diphosphate + phosphate + H(+). The enzyme catalyses ATP + H2O = ADP + phosphate + H(+). It carries out the reaction RNA(n) + a ribonucleoside 5'-triphosphate = RNA(n+1) + diphosphate. Functionally, packages viral RNA to form a viral nucleocapsid, and promotes virion budding. Participates in the viral particle production as a result of its interaction with the non-structural protein 5A. Binds RNA and may function as a RNA chaperone to induce the RNA structural rearrangements taking place during virus replication. Modulates viral translation initiation by interacting with viral IRES and 40S ribosomal subunit. Probably affects various cell signaling pathways, host immunity and lipid metabolism. Its function is as follows. Forms a heterodimer with envelope glycoprotein E2, which mediates virus attachment to the host cell, virion internalization through clathrin-dependent endocytosis and fusion with host membrane. Fusion with the host cell is most likely mediated by both E1 and E2, through conformational rearrangements of the heterodimer required for fusion rather than a classical class II fusion mechanism. In terms of biological role, forms a heterodimer with envelope glycoprotein E1, which mediates virus attachment to the host cell, virion internalization through clathrin-dependent endocytosis and fusion with host membrane. Fusion with the host cell is most likely mediated by both E1 and E2, through conformational rearrangements of the heterodimer required for fusion rather than a classical class II fusion mechanism. May function as a multimeric ion channel protein (viroporin). Functionally, cysteine protease required for the proteolytic auto-cleavage between the non-structural proteins NS2 and NS3. The N-terminus of NS3 is required for the function of NS2 protease (active region NS2-3). Promotes the initiation of viral particle assembly by mediating the interaction between structural and non-structural proteins. Its function is as follows. Displays three enzymatic activities: serine protease with a chymotrypsin-like fold, NTPase and RNA helicase. NS3 serine protease, in association with NS4A, is responsible for the cleavages of NS3-NS4A, NS4A-NS4B, NS4B-NS5A and NS5A-NS5B. The NS3/NS4A complex prevents phosphorylation of host IRF3, thus preventing the establishment of dsRNA induced antiviral state. NS3 RNA helicase binds to RNA and unwinds both dsDNA and dsRNA in the 3' to 5' direction, and likely resolves RNA complicated stable secondary structures in the template strand. Cleaves host MAVS/CARDIF thereby preventing the establishment of an antiviral state. In terms of biological role, induces a specific membrane alteration that serves as a scaffold for the virus replication complex. This membrane alteration gives rise to the so-called ER-derived membranous web that contains the replication complex. NS4B self-interaction contributes to its function in membranous web formation. Phosphorylated protein that is indispensable for viral replication and assembly. Functionally, RNA-dependent RNA polymerase that performs primer-template recognition and RNA synthesis during viral replication. Initiates RNA transcription/replication at a flavin adenine dinucleotide (FAD), resulting in a 5'- FAD cap on viral RNAs. In this way, recognition of viral 5' RNA by host pattern recognition receptors can be bypassed, thereby evading activation of antiviral pathways. The polypeptide is Genome polyprotein (Hepatitis GB virus B (GBV-B)).